The following is a 475-amino-acid chain: Putative response regulator NtrX-like (475 aa).

The Response regulatory domain occupies 5-121; the sequence is DVLIVDDEES…KLVILLKRAC (117 aa). 4-aspartylphosphate is present on Asp54. The Sigma-54 factor interaction domain occupies 143-369; the sequence is LVGGCSVTLK…LRNVVEWTLI (227 aa). ATP is bound by residues 171–178 and 232–241; these read GKVGSGKE and ANNGTLYIDE.

In terms of biological role, member of the two-component regulatory system RF_0895/RF_0427. This is Putative response regulator NtrX-like from Rickettsia felis (strain ATCC VR-1525 / URRWXCal2) (Rickettsia azadi).